A 616-amino-acid chain; its full sequence is Dihydroxy-acid dehydratase (616 aa).

Asp-81 is a binding site for Mg(2+). Cys-122 contacts [2Fe-2S] cluster. Asp-123 and Lys-124 together coordinate Mg(2+). The residue at position 124 (Lys-124) is an N6-carboxylysine. Cys-195 provides a ligand contact to [2Fe-2S] cluster. A Mg(2+)-binding site is contributed by Glu-491. Ser-517 serves as the catalytic Proton acceptor.

The protein belongs to the IlvD/Edd family. Homodimer. Requires [2Fe-2S] cluster as cofactor. The cofactor is Mg(2+).

It carries out the reaction (2R)-2,3-dihydroxy-3-methylbutanoate = 3-methyl-2-oxobutanoate + H2O. It catalyses the reaction (2R,3R)-2,3-dihydroxy-3-methylpentanoate = (S)-3-methyl-2-oxopentanoate + H2O. Its pathway is amino-acid biosynthesis; L-isoleucine biosynthesis; L-isoleucine from 2-oxobutanoate: step 3/4. The protein operates within amino-acid biosynthesis; L-valine biosynthesis; L-valine from pyruvate: step 3/4. Its function is as follows. Functions in the biosynthesis of branched-chain amino acids. Catalyzes the dehydration of (2R,3R)-2,3-dihydroxy-3-methylpentanoate (2,3-dihydroxy-3-methylvalerate) into 2-oxo-3-methylpentanoate (2-oxo-3-methylvalerate) and of (2R)-2,3-dihydroxy-3-methylbutanoate (2,3-dihydroxyisovalerate) into 2-oxo-3-methylbutanoate (2-oxoisovalerate), the penultimate precursor to L-isoleucine and L-valine, respectively. The protein is Dihydroxy-acid dehydratase of Escherichia coli O17:K52:H18 (strain UMN026 / ExPEC).